We begin with the raw amino-acid sequence, 494 residues long: UDP-N-acetylmuramoyl-L-alanyl-D-glutamate--L-lysine ligase (494 aa).

Position 30 (Ser30) interacts with UDP-N-acetyl-alpha-D-muramoyl-L-alanyl-D-glutamate. Residue 110-116 (GTNGKTS) coordinates ATP. UDP-N-acetyl-alpha-D-muramoyl-L-alanyl-D-glutamate contacts are provided by residues 152–153 (TT), Ser179, and Arg187. Residue Lys219 is modified to N6-carboxylysine. The L-lysine recognition motif signature appears at 406–409 (DNPA).

This sequence belongs to the MurCDEF family. MurE subfamily. In terms of processing, carboxylation is probably crucial for Mg(2+) binding and, consequently, for the gamma-phosphate positioning of ATP.

It localises to the cytoplasm. The catalysed reaction is UDP-N-acetyl-alpha-D-muramoyl-L-alanyl-D-glutamate + L-lysine + ATP = UDP-N-acetyl-alpha-D-muramoyl-L-alanyl-gamma-D-glutamyl-L-lysine + ADP + phosphate + H(+). Its pathway is cell wall biogenesis; peptidoglycan biosynthesis. Catalyzes the addition of L-lysine to the nucleotide precursor UDP-N-acetylmuramoyl-L-alanyl-D-glutamate (UMAG) in the biosynthesis of bacterial cell-wall peptidoglycan. The protein is UDP-N-acetylmuramoyl-L-alanyl-D-glutamate--L-lysine ligase of Staphylococcus aureus (strain Mu3 / ATCC 700698).